The following is a 50-amino-acid chain: U-megalopygitoxin(9)-Mo13 (50 aa).

Positions 1 to 23 (MKLVFLFFIVAVMVSLFVGMTEA) are cleaved as a signal peptide. The cysteines at positions 33 and 40 are disulfide-linked.

Belongs to the caterpillar 9 family. As to expression, expressed by the venom apparatus.

The protein localises to the secreted. Its function is as follows. Probable toxin. The polypeptide is U-megalopygitoxin(9)-Mo13 (Megalopyge opercularis (Southern flannel moth)).